Here is a 254-residue protein sequence, read N- to C-terminus: C-X-C motif chemokine 16 (254 aa).

A signal peptide spans 1-29 (MGRDLRPGSRVLLLLLLLLLVYLTQPGNG). The Extracellular portion of the chain corresponds to 30–205 (NEGSVTGSCY…AGPTARTSAT (176 aa)). The chemokine stretch occupies residues 32–107 (GSVTGSCYCG…DLKECGHAYS (76 aa)). 2 cysteine pairs are disulfide-bonded: C38-C68 and C40-C82. The disordered stretch occupies residues 146-165 (QSTQRPTLPVGSLSSDKELT). An N-linked (GlcNAc...) asparagine glycan is attached at N168. The segment at 178 to 200 (SLAAGPEAGENQKQPEKNAGPTA) is disordered. Residues 206 to 226 (VPVLCLLAIIFILTAALSYVL) form a helical membrane-spanning segment. Topologically, residues 227–254 (CKRRRGQSPQSSPDLPVHYIPVAPDSNT) are cytoplasmic. The disordered stretch occupies residues 231 to 254 (RGQSPQSSPDLPVHYIPVAPDSNT).

This sequence belongs to the intercrine alpha (chemokine CxC) family. Glycosylated. In terms of tissue distribution, expressed in T-cell areas. Expressed in spleen, lymph nodes, lung, kidney, small intestine and thymus. Weak expression in heart and liver and no expression in brain and bone marrow.

Its subcellular location is the cell membrane. The protein localises to the secreted. In terms of biological role, acts as a scavenger receptor on macrophages, which specifically binds to OxLDL (oxidized low density lipoprotein), suggesting that it may be involved in pathophysiology such as atherogenesis. Induces a strong chemotactic response. Induces calcium mobilization. Binds to CXCR6/Bonzo. This Homo sapiens (Human) protein is C-X-C motif chemokine 16 (CXCL16).